We begin with the raw amino-acid sequence, 277 residues long: 3-methyl-2-oxobutanoate hydroxymethyltransferase (277 aa).

Mg(2+) contacts are provided by Asp53 and Asp96. Residues 53-54, Asp96, and Lys126 contribute to the 3-methyl-2-oxobutanoate site; that span reads DS. Glu128 provides a ligand contact to Mg(2+). Glu195 (proton acceptor) is an active-site residue.

It belongs to the PanB family. Homodecamer; pentamer of dimers. Requires Mg(2+) as cofactor.

The protein localises to the cytoplasm. It carries out the reaction 3-methyl-2-oxobutanoate + (6R)-5,10-methylene-5,6,7,8-tetrahydrofolate + H2O = 2-dehydropantoate + (6S)-5,6,7,8-tetrahydrofolate. It functions in the pathway cofactor biosynthesis; (R)-pantothenate biosynthesis; (R)-pantoate from 3-methyl-2-oxobutanoate: step 1/2. In terms of biological role, catalyzes the reversible reaction in which hydroxymethyl group from 5,10-methylenetetrahydrofolate is transferred onto alpha-ketoisovalerate to form ketopantoate. The sequence is that of 3-methyl-2-oxobutanoate hydroxymethyltransferase from Chlorobaculum parvum (strain DSM 263 / NCIMB 8327) (Chlorobium vibrioforme subsp. thiosulfatophilum).